Here is a 66-residue protein sequence, read N- to C-terminus: Large ribosomal subunit protein bL33c (66 aa).

This sequence belongs to the bacterial ribosomal protein bL33 family.

It is found in the plastid. Its subcellular location is the chloroplast. The chain is Large ribosomal subunit protein bL33c from Cicer arietinum (Chickpea).